Here is a 342-residue protein sequence, read N- to C-terminus: NADH-quinone oxidoreductase subunit H (342 aa).

Transmembrane regions (helical) follow at residues 15–35 (LLII…LMVA), 86–106 (VLFI…WAVV), 119–139 (VGVL…IIAG), 159–179 (VSYE…VGSL), 190–210 (HVWF…SGLA), 251–271 (FMIC…PFDI), 277–297 (VPGP…FFWV), and 316–336 (VFLP…ELAG).

It belongs to the complex I subunit 1 family. NDH-1 is composed of 14 different subunits. Subunits NuoA, H, J, K, L, M, N constitute the membrane sector of the complex.

Its subcellular location is the cell inner membrane. The enzyme catalyses a quinone + NADH + 5 H(+)(in) = a quinol + NAD(+) + 4 H(+)(out). NDH-1 shuttles electrons from NADH, via FMN and iron-sulfur (Fe-S) centers, to quinones in the respiratory chain. The immediate electron acceptor for the enzyme in this species is believed to be ubiquinone. Couples the redox reaction to proton translocation (for every two electrons transferred, four hydrogen ions are translocated across the cytoplasmic membrane), and thus conserves the redox energy in a proton gradient. This subunit may bind ubiquinone. The chain is NADH-quinone oxidoreductase subunit H from Granulibacter bethesdensis (strain ATCC BAA-1260 / CGDNIH1).